Here is a 652-residue protein sequence, read N- to C-terminus: Phosphatidylinositol-binding clathrin assembly protein (652 aa).

Ser2 bears the N-acetylserine mark. An ENTH domain is found at 14–145; it reads QHSVTGSAVS…VSYRQVAFDF (132 aa). Residues Ser16 and Ser20 each carry the phosphoserine modification. The tract at residues 221–294 is interaction with PIMREG; it reads KYFDMKKNQC…LEGKKIKDST (74 aa). A Glycyl lysine isopeptide (Lys-Gly) (interchain with G-Cter in SUMO2) cross-link involves residue Lys238. Residues Ser303 and Ser315 each carry the phosphoserine modification. Residues 559 to 580 form a disordered region; the sequence is KNDVNWSQPGEKKLTGGSNWQP.

The protein belongs to the PICALM/SNAP91 family. Binds to clathrin; involves primarily the C-terminal sequences, but the full-length protein is required for full binding capacity. Binds phosphatidylinositol 4,5- bisphosphate. Interacts with PIMREG; this interaction may change the subcellular location into the nucleus. Interacts with AP2A1 (via its alpha-appendage domain). Interacts (via N-terminus) with VAMP2; VAMP3; VAMP7 and VAMP8 (Via N-terminus). Interacts with LC3/MAP1LC3A. In terms of tissue distribution, expressed in all tissues examined.

Its subcellular location is the cell membrane. It is found in the membrane. The protein resides in the clathrin-coated pit. The protein localises to the golgi apparatus. It localises to the cytoplasmic vesicle. Its subcellular location is the clathrin-coated vesicle. It is found in the nucleus. Its function is as follows. Cytoplasmic adapter protein that plays a critical role in clathrin-mediated endocytosis which is important in processes such as internalization of cell receptors, synaptic transmission or removal of apoptotic cells. Recruits AP-2 and attaches clathrin triskelions to the cytoplasmic side of plasma membrane leading to clathrin-coated vesicles (CCVs) assembly. Furthermore, regulates clathrin-coated vesicle size and maturation by directly sensing and driving membrane curvature. In addition to binding to clathrin, mediates the endocytosis of small R-SNARES (Soluble NSF Attachment Protein REceptors) between plasma membranes and endosomes including VAMP2, VAMP3, VAMP4, VAMP7 or VAMP8. In turn, PICALM-dependent SNARE endocytosis is required for the formation and maturation of autophagic precursors. Modulates thereby autophagy and the turnover of autophagy substrates such as MAPT/TAU or amyloid precursor protein cleaved C-terminal fragment (APP-CTF). In Homo sapiens (Human), this protein is Phosphatidylinositol-binding clathrin assembly protein (PICALM).